The chain runs to 319 residues: Aspartate carbamoyltransferase catalytic subunit (319 aa).

2 residues coordinate carbamoyl phosphate: Arg64 and Thr65. Lys92 lines the L-aspartate pocket. Carbamoyl phosphate contacts are provided by Arg114, His142, and Gln145. L-aspartate contacts are provided by Arg175 and Arg229. Carbamoyl phosphate is bound by residues Gly270 and Pro271.

It belongs to the aspartate/ornithine carbamoyltransferase superfamily. ATCase family. In terms of assembly, heterododecamer (2C3:3R2) of six catalytic PyrB chains organized as two trimers (C3), and six regulatory PyrI chains organized as three dimers (R2).

The catalysed reaction is carbamoyl phosphate + L-aspartate = N-carbamoyl-L-aspartate + phosphate + H(+). The protein operates within pyrimidine metabolism; UMP biosynthesis via de novo pathway; (S)-dihydroorotate from bicarbonate: step 2/3. In terms of biological role, catalyzes the condensation of carbamoyl phosphate and aspartate to form carbamoyl aspartate and inorganic phosphate, the committed step in the de novo pyrimidine nucleotide biosynthesis pathway. The chain is Aspartate carbamoyltransferase catalytic subunit from Rhodospirillum rubrum (strain ATCC 11170 / ATH 1.1.1 / DSM 467 / LMG 4362 / NCIMB 8255 / S1).